We begin with the raw amino-acid sequence, 232 residues long: Lipoprotein-releasing system ATP-binding protein LolD 1 (232 aa).

Residues Val11 to Leu231 form the ABC transporter domain. An ATP-binding site is contributed by Ala47–Ser54.

It belongs to the ABC transporter superfamily. Lipoprotein translocase (TC 3.A.1.125) family. In terms of assembly, the complex is composed of two ATP-binding proteins (LolD) and two transmembrane proteins (LolC and LolE).

Its subcellular location is the cell inner membrane. Part of the ABC transporter complex LolCDE involved in the translocation of mature outer membrane-directed lipoproteins, from the inner membrane to the periplasmic chaperone, LolA. Responsible for the formation of the LolA-lipoprotein complex in an ATP-dependent manner. The protein is Lipoprotein-releasing system ATP-binding protein LolD 1 of Rhodopseudomonas palustris (strain BisB18).